Here is a 156-residue protein sequence, read N- to C-terminus: Acyl carrier protein, mitochondrial (156 aa).

A mitochondrion-targeting transit peptide spans 1–68 (MASRVLSAYV…GRVTQLCRQY (68 aa)). Residues 77-152 (EGIQDRVLYV…EIVDYIADKK (76 aa)) enclose the Carrier domain. Lys88 carries the post-translational modification N6-acetyllysine. An O-(pantetheine 4'-phosphoryl)serine modification is found at Ser112.

Belongs to the acyl carrier protein (ACP) family. Mammalian complex I is composed of 45 different subunits. Interacts with ETFRF1. Identified in a complex composed of MALSU1, MIEF1 upstream open reading frame protein and NDUFAB1; within the trimeric complex, MIEF1 upstream open reading frame protein functions as a bridging scaffold that interacts with MALSU1 on one side, and with NDUFAB1 on the other side. The complex interacts with the mitochondrial large ribosomal subunit. Interacts with alpha-1-microglobulin chain; this interaction is required for the maintenance of mitochondrial redox homeostasis. Component of the mitochondrial core iron-sulfur cluster (ISC) complex composed of NFS1, LYRM4, NDUFAB1, ISCU, FXN, and FDX2; this complex is a heterohexamer containing two copies of each monomer. Component of the cyteine desulfurase complex composed of NFS1, LYRM4 and NDUFAB1; this complex contributes to the stability and cysteine desulfurase activity of NFS1. Phosphopantetheinylation at Ser-112 is essential for interactions with LYR motif-containing proteins.

The protein localises to the mitochondrion. In terms of biological role, carrier of the growing fatty acid chain in fatty acid biosynthesis. Accessory and non-catalytic subunit of the mitochondrial membrane respiratory chain NADH dehydrogenase (Complex I), which functions in the transfer of electrons from NADH to the respiratory chain. Accessory protein, of the core iron-sulfur cluster (ISC) assembly complex, that regulates, in association with LYRM4, the stability and the cysteine desulfurase activity of NFS1 and participates in the [2Fe-2S] clusters assembly on the scaffolding protein ISCU. The core iron-sulfur cluster (ISC) assembly complex is involved in the de novo synthesis of a [2Fe-2S] cluster, the first step of the mitochondrial iron-sulfur protein biogenesis. This process is initiated by the cysteine desulfurase complex (NFS1:LYRM4:NDUFAB1) that produces persulfide which is delivered on the scaffold protein ISCU in a FXN-dependent manner. Then this complex is stabilized by FDX2 which provides reducing equivalents to accomplish the [2Fe-2S] cluster assembly. Finally, the [2Fe-2S] cluster is transferred from ISCU to chaperone proteins, including HSCB, HSPA9 and GLRX5. The protein is Acyl carrier protein, mitochondrial of Pongo pygmaeus (Bornean orangutan).